Here is a 580-residue protein sequence, read N- to C-terminus: DBIRD complex subunit ZNF326 (580 aa).

The segment at 1 to 124 is mediates transcriptional activation; that stretch reads MDFEDDYVHS…YRNSLDSFGG (124 aa). Ser48, Ser56, Ser63, Ser69, Ser81, Ser82, Ser91, Ser106, Ser114, Ser118, Ser121, and Ser137 each carry phosphoserine. Lys140 is covalently cross-linked (Glycyl lysine isopeptide (Lys-Gly) (interchain with G-Cter in SUMO2)). The interval 156-196 is disordered; the sequence is SYSSFSSPHMKPAPVGSRGRGTPAYPESTFGSRSYDAFGGP. The residue at position 173 (Arg173) is an Omega-N-methylarginine. A Phosphoserine modification is found at Ser212. Residue Arg235 is modified to Omega-N-methylarginine. A Bipartite nuclear localization signal motif is present at residues 238 to 260; that stretch reads KRKMMQIFIKPGGAFIKKPKLAK. Lys240 is covalently cross-linked (Glycyl lysine isopeptide (Lys-Gly) (interchain with G-Cter in SUMO2)). Residue Lys247 is modified to N6-acetyllysine; alternate. Residue Lys247 forms a Glycyl lysine isopeptide (Lys-Gly) (interchain with G-Cter in SUMO2); alternate linkage. Glycyl lysine isopeptide (Lys-Gly) (interchain with G-Cter in SUMO2) cross-links involve residues Lys254 and Lys264. Positions 256-302 are disordered; that stretch reads PKLAKPMDKMNLSKSPTKTDPKNEEEEKRRIEARREKQRRRREKNSE. A Phosphoserine modification is found at Ser270. Basic and acidic residues predominate over residues 272–290; sequence TKTDPKNEEEEKRRIEARR. A C2H2 AKAP95-type 1 zinc finger spans residues 314 to 336; sequence CSFCKFRTFEEKDIELHLESSSH. Lys401 is covalently cross-linked (Glycyl lysine isopeptide (Lys-Gly) (interchain with G-Cter in SUMO2)). The C2H2 AKAP95-type 2 zinc-finger motif lies at 407–430; the sequence is CSACSVYIPALHSSVQLHLKSPDH. Residues Lys459 and Lys467 each participate in a glycyl lysine isopeptide (Lys-Gly) (interchain with G-Cter in SUMO2) cross-link. The segment at 470–580 is disordered; it reads NPFEIQDHPQ…ATEQCEHRQM (111 aa). Acidic residues predominate over residues 483–529; that stretch reads IEGDEEDEEKIDEPIEEEEEEEEEEEEEGEEAGSVEEEGDVEGEEGT. Positions 530–539 are enriched in low complexity; that stretch reads AEAAAAGEAD. The span at 540–562 shows a compositional bias: acidic residues; sequence AVGEAEGAGEAEEAEEEEEEEGT.

It belongs to the AKAP95 family. As to quaternary structure, component of the DBIRD complex. Interacts with CCAR2; the interaction is direct. As to expression, ubiquitously expressed in adult tissues. Highly expressed in neuronal tissues such as brain and neural tube.

It is found in the nucleus matrix. Functionally, core component of the DBIRD complex, a multiprotein complex that acts at the interface between core mRNP particles and RNA polymerase II (RNAPII) and integrates transcript elongation with the regulation of alternative splicing: the DBIRD complex affects local transcript elongation rates and alternative splicing of a large set of exons embedded in (A + T)-rich DNA regions. May also play a role in neuronal differentiation. Able to bind DNA and activate expression in vitro. The sequence is that of DBIRD complex subunit ZNF326 (Znf326) from Mus musculus (Mouse).